The chain runs to 373 residues: Tryptophan--tRNA ligase (373 aa).

A 'HIGH' region motif is present at residues 79–87; it reads PSGKFHFGH. The short motif at 257-261 is the 'KMSKS' region element; that stretch reads KMSSS.

This sequence belongs to the class-I aminoacyl-tRNA synthetase family.

The protein resides in the cytoplasm. The enzyme catalyses tRNA(Trp) + L-tryptophan + ATP = L-tryptophyl-tRNA(Trp) + AMP + diphosphate + H(+). The chain is Tryptophan--tRNA ligase from Hyperthermus butylicus (strain DSM 5456 / JCM 9403 / PLM1-5).